Consider the following 1755-residue polypeptide: Transposon Ty1-OL Gag-Pol polyprotein (1755 aa).

3 stretches are compositionally biased toward polar residues: residues 1-23 (MESQQLSNYPQISHGSACASVTS), 48-60 (TKANSQQTTTPAS), and 127-152 (QSQFPQYPSSVGTPLSTPSPESGNTF). Disordered stretches follow at residues 1–93 (MESQ…MMTQ), 126–173 (PQSQ…RPPP), and 352–421 (GSRN…SKST). Residues 153-165 (TDSSSADSDMTST) are compositionally biased toward low complexity. The interval 299-401 (NNGIHINNKV…NSKSKTARAH (103 aa)) is RNA-binding. Low complexity predominate over residues 402–418 (NVSTSNNSPSTDNDSIS). Residue serine 416 is modified to Phosphoserine. The For protease activity; shared with dimeric partner role is filled by aspartate 461. Residues 583–640 (NVHTSESTRKYPYPFIHRMLAHANAQTIRYSLKNNTITYFNESDVDWSSAIDYQCPDC) are integrase-type zinc finger-like. Residues 660–835 (NSYEPFQYLH…AGLDISTLLP (176 aa)) enclose the Integrase catalytic domain. Residues aspartate 671 and aspartate 736 each coordinate Mg(2+). Disordered stretches follow at residues 956-1087 (SKAV…ETEK), 1092-1111 (RSPSIDASPPENNSSHNIVP), and 1130-1171 (DLPL…DSNA). Positions 960–969 (SPTDSTPPST) are enriched in low complexity. A compositionally biased stretch (polar residues) spans 1005 to 1015 (STPQISNIEST). The span at 1038 to 1053 (ESSHASKSKDFRHSDS) shows a compositional bias: basic and acidic residues. Polar residues-rich tracts occupy residues 1054–1082 (YSENETNHTNVPISSTGGTNNKTVPQISD) and 1101–1111 (PENNSSHNIVP). Positions 1178-1212 (KKRSLEDNETEIKVSRDTWNTKNMRSLEPPRSKKR) match the Bipartite nuclear localization signal motif. A Reverse transcriptase Ty1/copia-type domain is found at 1338–1476 (NNYYITQLDI…DILGLEIKYQ (139 aa)). Mg(2+)-binding residues include aspartate 1346, aspartate 1427, aspartate 1428, aspartate 1610, glutamate 1652, and aspartate 1685. The RNase H Ty1/copia-type domain maps to 1610-1752 (DASYGNQPYY…IKTFKLLTNK (143 aa)).

As to quaternary structure, the capsid protein forms a homotrimer, from which the VLPs are assembled. The protease is a homodimer, whose active site consists of two apposed aspartic acid residues. Initially, virus-like particles (VLPs) are composed of the structural unprocessed proteins Gag and Gag-Pol, and also contain the host initiator methionine tRNA (tRNA(i)-Met) which serves as a primer for minus-strand DNA synthesis, and a dimer of genomic Ty RNA. Processing of the polyproteins occurs within the particle and proceeds by an ordered pathway, called maturation. First, the protease (PR) is released by autocatalytic cleavage of the Gag-Pol polyprotein yielding capsid protein p45 and a Pol-p154 precursor protein. This cleavage is a prerequisite for subsequent processing of Pol-p154 at the remaining sites to release the mature structural and catalytic proteins. Maturation takes place prior to the RT reaction and is required to produce transposition-competent VLPs.

It localises to the cytoplasm. It is found in the nucleus. The catalysed reaction is DNA(n) + a 2'-deoxyribonucleoside 5'-triphosphate = DNA(n+1) + diphosphate. The enzyme catalyses Endonucleolytic cleavage to 5'-phosphomonoester.. In terms of biological role, capsid protein (CA) is the structural component of the virus-like particle (VLP), forming the shell that encapsulates the retrotransposons dimeric RNA genome. The particles are assembled from trimer-clustered units and there are holes in the capsid shells that allow for the diffusion of macromolecules. CA also has nucleocapsid-like chaperone activity, promoting primer tRNA(i)-Met annealing to the multipartite primer-binding site (PBS), dimerization of Ty1 RNA and initiation of reverse transcription. Its function is as follows. The aspartyl protease (PR) mediates the proteolytic cleavages of the Gag and Gag-Pol polyproteins after assembly of the VLP. Reverse transcriptase/ribonuclease H (RT) is a multifunctional enzyme that catalyzes the conversion of the retro-elements RNA genome into dsDNA within the VLP. The enzyme displays a DNA polymerase activity that can copy either DNA or RNA templates, and a ribonuclease H (RNase H) activity that cleaves the RNA strand of RNA-DNA heteroduplexes during plus-strand synthesis and hydrolyzes RNA primers. The conversion leads to a linear dsDNA copy of the retrotransposon that includes long terminal repeats (LTRs) at both ends. Functionally, integrase (IN) targets the VLP to the nucleus, where a subparticle preintegration complex (PIC) containing at least integrase and the newly synthesized dsDNA copy of the retrotransposon must transit the nuclear membrane. Once in the nucleus, integrase performs the integration of the dsDNA into the host genome. This chain is Transposon Ty1-OL Gag-Pol polyprotein (TY1B-OL), found in Saccharomyces cerevisiae (strain ATCC 204508 / S288c) (Baker's yeast).